A 166-amino-acid polypeptide reads, in one-letter code: UPF0251 protein UNCMA_27150 (166 aa).

Belongs to the UPF0251 family.

This Methanocella arvoryzae (strain DSM 22066 / NBRC 105507 / MRE50) protein is UPF0251 protein UNCMA_27150.